Reading from the N-terminus, the 464-residue chain is ATP synthase subunit beta (464 aa).

153–160 contributes to the ATP binding site; that stretch reads GGAGVGKT.

The protein belongs to the ATPase alpha/beta chains family. In terms of assembly, F-type ATPases have 2 components, CF(1) - the catalytic core - and CF(0) - the membrane proton channel. CF(1) has five subunits: alpha(3), beta(3), gamma(1), delta(1), epsilon(1). CF(0) has three main subunits: a(1), b(2) and c(9-12). The alpha and beta chains form an alternating ring which encloses part of the gamma chain. CF(1) is attached to CF(0) by a central stalk formed by the gamma and epsilon chains, while a peripheral stalk is formed by the delta and b chains.

The protein localises to the cell inner membrane. It carries out the reaction ATP + H2O + 4 H(+)(in) = ADP + phosphate + 5 H(+)(out). Functionally, produces ATP from ADP in the presence of a proton gradient across the membrane. The catalytic sites are hosted primarily by the beta subunits. The sequence is that of ATP synthase subunit beta from Burkholderia lata (strain ATCC 17760 / DSM 23089 / LMG 22485 / NCIMB 9086 / R18194 / 383).